The following is a 120-amino-acid chain: Ribosome-binding factor A (120 aa).

This sequence belongs to the RbfA family. Monomer. Binds 30S ribosomal subunits, but not 50S ribosomal subunits or 70S ribosomes.

It localises to the cytoplasm. One of several proteins that assist in the late maturation steps of the functional core of the 30S ribosomal subunit. Associates with free 30S ribosomal subunits (but not with 30S subunits that are part of 70S ribosomes or polysomes). Required for efficient processing of 16S rRNA. May interact with the 5'-terminal helix region of 16S rRNA. This chain is Ribosome-binding factor A, found in Limosilactobacillus fermentum (strain NBRC 3956 / LMG 18251) (Lactobacillus fermentum).